The chain runs to 233 residues: MAKKHSKRYQELLKKIDKDVYNLKEAAEKVKELKSAKFDETVELALKLGVDPRHADQMIRGSVVLPHGTGKTVKVAVLAKGAKADEAKEAGADIVGEEEVLEMIQNGNLDFDILIATPDMMGKLGRFGKILGPKGLMPNPKTGTVTMDVAQAVKNAKAGQVNFRVDKKGNMHVGIGKASFDAEKIYENAVAFIEKINKMKPASAKGRYIQNAALSLTMSPSVKLDVNELTEYK.

It belongs to the universal ribosomal protein uL1 family. Part of the 50S ribosomal subunit.

Its function is as follows. Binds directly to 23S rRNA. The L1 stalk is quite mobile in the ribosome, and is involved in E site tRNA release. In terms of biological role, protein L1 is also a translational repressor protein, it controls the translation of the L11 operon by binding to its mRNA. This Nautilia profundicola (strain ATCC BAA-1463 / DSM 18972 / AmH) protein is Large ribosomal subunit protein uL1.